A 212-amino-acid polypeptide reads, in one-letter code: ATP phosphoribosyltransferase (212 aa).

It belongs to the ATP phosphoribosyltransferase family. Short subfamily. In terms of assembly, heteromultimer composed of HisG and HisZ subunits.

The protein resides in the cytoplasm. The enzyme catalyses 1-(5-phospho-beta-D-ribosyl)-ATP + diphosphate = 5-phospho-alpha-D-ribose 1-diphosphate + ATP. The protein operates within amino-acid biosynthesis; L-histidine biosynthesis; L-histidine from 5-phospho-alpha-D-ribose 1-diphosphate: step 1/9. Functionally, catalyzes the condensation of ATP and 5-phosphoribose 1-diphosphate to form N'-(5'-phosphoribosyl)-ATP (PR-ATP). Has a crucial role in the pathway because the rate of histidine biosynthesis seems to be controlled primarily by regulation of HisG enzymatic activity. This is ATP phosphoribosyltransferase from Prochlorococcus marinus (strain MIT 9312).